The primary structure comprises 273 residues: MLTAHHLDVARRHHAILRNLSLSIEPGRVTALLGRNGAGKSTLLKTFAGELTGGVAPNGVRVTGDITLNGEPLARIDAPRLACLRAVLPQAAQPAFPFSVDEIVLLGRYPHARRSGATSHRDRDIAWCALERAGADALVGRDVTTLSGGELARVQFARVLAQLWPDDEAIESGPRYLLLDEPTAALDLSHQHRLLETVRAVAREWQLGVLAIVHDPNLAARHADTIAMLADGTIVAHGSPRDVMTPAHIAQCYGFAVKMVETGDGAPPVMVPA.

The ABC transporter domain maps to 2 to 256; the sequence is LTAHHLDVAR…AHIAQCYGFA (255 aa). An ATP-binding site is contributed by 34–41; sequence GRNGAGKS.

Belongs to the ABC transporter superfamily. Heme (hemin) importer (TC 3.A.1.14.5) family. As to quaternary structure, the complex is composed of two ATP-binding proteins (HmuV), two transmembrane proteins (HmuU) and a solute-binding protein (HmuT).

The protein resides in the cell inner membrane. Part of the ABC transporter complex HmuTUV involved in hemin import. Responsible for energy coupling to the transport system. This chain is Hemin import ATP-binding protein HmuV, found in Burkholderia lata (strain ATCC 17760 / DSM 23089 / LMG 22485 / NCIMB 9086 / R18194 / 383).